Consider the following 418-residue polypeptide: UDP-N-acetylglucosamine 1-carboxyvinyltransferase (418 aa).

22–23 (KN) lines the phosphoenolpyruvate pocket. Residue arginine 92 participates in UDP-N-acetyl-alpha-D-glucosamine binding. The active-site Proton donor is the cysteine 116. Residue cysteine 116 is modified to 2-(S-cysteinyl)pyruvic acid O-phosphothioketal. UDP-N-acetyl-alpha-D-glucosamine is bound by residues aspartate 306 and isoleucine 328.

This sequence belongs to the EPSP synthase family. MurA subfamily.

Its subcellular location is the cytoplasm. It catalyses the reaction phosphoenolpyruvate + UDP-N-acetyl-alpha-D-glucosamine = UDP-N-acetyl-3-O-(1-carboxyvinyl)-alpha-D-glucosamine + phosphate. It functions in the pathway cell wall biogenesis; peptidoglycan biosynthesis. Its function is as follows. Cell wall formation. Adds enolpyruvyl to UDP-N-acetylglucosamine. The polypeptide is UDP-N-acetylglucosamine 1-carboxyvinyltransferase (Shewanella amazonensis (strain ATCC BAA-1098 / SB2B)).